Here is a 314-residue protein sequence, read N- to C-terminus: Deoxyribonuclease-1-like 1 (314 aa).

The signal sequence occupies residues 1-37 (MPFGQPGFLWRVPDAHIAMRGLVMAPLLILLVGGTEA). Asparagine 102 carries an N-linked (GlcNAc...) asparagine glycan. Glutamate 113 is a catalytic residue. Residue asparagine 133 is glycosylated (N-linked (GlcNAc...) asparagine). The active site involves histidine 164. A disulfide bridge connects residues cysteine 203 and cysteine 240. A glycan (N-linked (GlcNAc...) asparagine) is linked at asparagine 239.

Belongs to the DNase I family. Highly expressed in heart and skeletal muscles. Low expression in brain and thymus. Intermediated expression in other tissues.

The protein localises to the endoplasmic reticulum. In Mus musculus (Mouse), this protein is Deoxyribonuclease-1-like 1 (Dnase1l1).